Reading from the N-terminus, the 245-residue chain is Ribonuclease 3 (245 aa).

One can recognise an RNase III domain in the interval 18 to 146 (LSKFLENLSI…FVGAIYLDSG (129 aa)). Glu59 lines the Mg(2+) pocket. Asp63 is an active-site residue. Residues Asp132 and Glu135 each coordinate Mg(2+). Glu135 is a catalytic residue. In terms of domain architecture, DRBM spans 173–242 (DYKSLLQEYV…AEVALKAMEN (70 aa)).

Belongs to the ribonuclease III family. As to quaternary structure, homodimer. It depends on Mg(2+) as a cofactor.

The protein resides in the cytoplasm. The enzyme catalyses Endonucleolytic cleavage to 5'-phosphomonoester.. Its function is as follows. Digests double-stranded RNA. Involved in the processing of primary rRNA transcript to yield the immediate precursors to the large and small rRNAs (23S and 16S). Processes some mRNAs, and tRNAs when they are encoded in the rRNA operon. Processes pre-crRNA and tracrRNA of type II CRISPR loci if present in the organism. The polypeptide is Ribonuclease 3 (Borreliella burgdorferi (strain ATCC 35210 / DSM 4680 / CIP 102532 / B31) (Borrelia burgdorferi)).